A 440-amino-acid chain; its full sequence is 3-phosphoshikimate 1-carboxyvinyltransferase (440 aa).

3-phosphoshikimate-binding residues include Lys-31, Ser-32, and Arg-36. Residue Lys-31 coordinates phosphoenolpyruvate. Residues Gly-104 and Arg-133 each coordinate phosphoenolpyruvate. The 3-phosphoshikimate site is built by Ser-178, Gln-180, Asp-328, and Lys-355. Gln-180 is a binding site for phosphoenolpyruvate. The active-site Proton acceptor is the Asp-328. 2 residues coordinate phosphoenolpyruvate: Arg-359 and Arg-401.

This sequence belongs to the EPSP synthase family. In terms of assembly, monomer.

It is found in the cytoplasm. The catalysed reaction is 3-phosphoshikimate + phosphoenolpyruvate = 5-O-(1-carboxyvinyl)-3-phosphoshikimate + phosphate. Its pathway is metabolic intermediate biosynthesis; chorismate biosynthesis; chorismate from D-erythrose 4-phosphate and phosphoenolpyruvate: step 6/7. In terms of biological role, catalyzes the transfer of the enolpyruvyl moiety of phosphoenolpyruvate (PEP) to the 5-hydroxyl of shikimate-3-phosphate (S3P) to produce enolpyruvyl shikimate-3-phosphate and inorganic phosphate. The chain is 3-phosphoshikimate 1-carboxyvinyltransferase from Thermosynechococcus vestitus (strain NIES-2133 / IAM M-273 / BP-1).